The sequence spans 986 residues: Ephrin type-A receptor 4 (986 aa).

The N-terminal stretch at 1–19 (MAGIFYFILFSFLFGICDA) is a signal peptide. Residues 20-547 (VTGSRVYPAN…RIIGDGANST (528 aa)) lie on the Extracellular side of the membrane. The Eph LBD domain occupies 30-209 (EVTLLDSRSV…FYKKCPLTVR (180 aa)). Residues asparagine 235, asparagine 340, and asparagine 408 are each glycosylated (N-linked (GlcNAc...) asparagine). 2 Fibronectin type-III domains span residues 328-439 (PPSA…TNQA) and 440-537 (APSS…TVPS). Residues 548-569 (VLLVSVSGSVVLVVILIAAFVI) traverse the membrane as a helical segment. The Cytoplasmic portion of the chain corresponds to 570–986 (SRRRSKYSKA…QQMHGRMVPV (417 aa)). A phosphotyrosine; by autocatalysis mark is found at tyrosine 596 and tyrosine 602. Positions 621–882 (IKIEKVIGVG…QIVNMLDKLI (262 aa)) constitute a Protein kinase domain. ATP contacts are provided by residues 627 to 635 (IGVGEFGEV) and lysine 653. Aspartate 746 acts as the Proton acceptor in catalysis. Tyrosine 779 and tyrosine 928 each carry phosphotyrosine; by autocatalysis. The SAM domain maps to 911–975 (SAVVSVGDWL…LSSVQAMRTQ (65 aa)). A PDZ-binding motif is present at residues 984-986 (VPV).

Belongs to the protein kinase superfamily. Tyr protein kinase family. Ephrin receptor subfamily. As to quaternary structure, heterotetramer upon binding of the ligand. The heterotetramer is composed of an ephrin dimer and a receptor dimer. Oligomerization is probably required to induce biological responses. Interacts (phosphorylated at position Tyr-602) with FYN. Interacts (via PDZ motif) with SIPA1L1 (via PDZ domain); controls neuronal morphology through regulation of the RAP1 (RAP1A or RAP1B) and RAP2 (RAP2A, RAP2B or RAP2C) GTPases. Interacts with CDK5, CDK5R1 and NGEF; upon activation by EFNA1 induces NGEF phosphorylation by the kinase CDK5. Interacts with CHN1; effector of EPHA4 in axon guidance linking EPHA4 activation to RAC1 regulation. Forms a ternary complex composed of ADAM10, CADH1 and EPHA4; within the complex, CADH1 is cleaved by ADAM10 which disrupts adherens junctions. In terms of tissue distribution, expressed in inner and outer pillar cells of the organ of Corti (at protein level). Highest expression in the adult brain and retina and also detectable in kidney, lung, skeletal muscle and thymus. Not detected in heart and liver. Expressed in myogenic progenitor cells.

It is found in the cell membrane. Its subcellular location is the cell projection. The protein localises to the axon. It localises to the dendrite. The protein resides in the postsynaptic density membrane. It is found in the early endosome. Its subcellular location is the cell junction. The protein localises to the adherens junction. The enzyme catalyses L-tyrosyl-[protein] + ATP = O-phospho-L-tyrosyl-[protein] + ADP + H(+). Its function is as follows. Receptor tyrosine kinase which binds membrane-bound ephrin family ligands residing on adjacent cells, leading to contact-dependent bidirectional signaling into neighboring cells. The signaling pathway downstream of the receptor is referred to as forward signaling while the signaling pathway downstream of the ephrin ligand is referred to as reverse signaling. Highly promiscuous, it has the unique property among Eph receptors to bind and to be physiologically activated by both GPI-anchored ephrin-A and transmembrane ephrin-B ligands including EFNA1 and EFNB3. Upon activation by ephrin ligands, modulates cell morphology and integrin-dependent cell adhesion through regulation of the Rac, Rap and Rho GTPases activity. Plays an important role in the development of the nervous system controlling different steps of axonal guidance including the establishment of the corticospinal projections. May also control the segregation of motor and sensory axons during neuromuscular circuit developmen. In addition to its role in axonal guidance plays a role in synaptic plasticity. Activated by EFNA1 phosphorylates CDK5 at 'Tyr-15' which in turn phosphorylates NGEF regulating RHOA and dendritic spine morphogenesis. In the nervous system, also plays a role in repair after injury preventing axonal regeneration and in angiogenesis playing a role in central nervous system vascular formation. Additionally, its promiscuity makes it available to participate in a variety of cell-cell signaling regulating for instance the development of the thymic epithelium. During development of the cochlear organ of Corti, regulates pillar cell separation by forming a ternary complex with ADAM10 and CADH1 which facilitates the cleavage of CADH1 by ADAM10 and disruption of adherens junctions. Phosphorylates CAPRIN1, promoting CAPRIN1-dependent formation of a membraneless compartment. The polypeptide is Ephrin type-A receptor 4 (Epha4) (Mus musculus (Mouse)).